We begin with the raw amino-acid sequence, 169 residues long: Large ribosomal subunit protein uL5 (169 aa).

It belongs to the universal ribosomal protein uL5 family. As to quaternary structure, part of the 50S ribosomal subunit; contacts the 5S rRNA and probably tRNA. Forms a bridge to the 30S subunit in the 70S ribosome.

Its function is as follows. This is one of the proteins that bind and probably mediate the attachment of the 5S RNA into the large ribosomal subunit, where it forms part of the central protuberance. In the 70S ribosome it contacts protein S13 of the 30S subunit (bridge B1b), connecting the 2 subunits; this bridge is implicated in subunit movement. May contact the P site tRNA; the 5S rRNA and some of its associated proteins might help stabilize positioning of ribosome-bound tRNAs. The chain is Large ribosomal subunit protein uL5 from Cenarchaeum symbiosum (strain A).